The primary structure comprises 540 residues: Early growth response protein 1 (540 aa).

Disordered regions lie at residues 1-105 and 162-240; these read MAAA…AESF and VSMT…PAYP. Gly residues predominate over residues 64–75; sequence SSGGGGGGGGGS. The span at 167–190 shows a compositional bias: low complexity; that stretch reads PPATSSSASSPAASSSASQSPPLS. Residues 192-201 show a composition bias toward polar residues; the sequence is AVQSNDSSPI. Lys304 is covalently cross-linked (Glycyl lysine isopeptide (Lys-Gly) (interchain with G-Cter in SUMO2)). A disordered region spans residues 317 to 337; the sequence is PSRMRKYPNRPSKTPPHERPY. The C2H2-type 1 zinc-finger motif lies at 337–361; the sequence is YACPVESCDRRFSRSDELTRHIRIH. Residues 366-388 form a C2H2-type 2; degenerate zinc finger; that stretch reads PQCRISMRNFSRSDHLTTHIRTH. The segment at 394 to 416 adopts a C2H2-type 3 zinc-finger fold; it reads FACDICGRKFARSDERKRHTKIH. The interval 407–482 is disordered; it reads DERKRHTKIH…SPGSSTYPSP (76 aa). The segment covering 411–421 has biased composition (basic residues); it reads RHTKIHLRQKD. Positions 427–482 are enriched in low complexity; that stretch reads SAASAATSSLPSYPSPVATSYPSPATTSYPSPATTSYPSPVPTSYSSPGSSTYPSP.

This sequence belongs to the EGR C2H2-type zinc-finger protein family. In terms of assembly, interacts with SNAI1 and SP1 upon 12-O-tetradecanoylphorbol-13-acetate (TPA) induction.

It is found in the nucleus. Its subcellular location is the cytoplasm. Transcriptional regulator. Recognizes and binds to the DNA sequence 5'-GCG(T/G)GGGCG-3'(EGR-site) in the promoter region of target genes. Binds double-stranded target DNA, irrespective of the cytosine methylation status. Regulates the transcription of numerous target genes, and thereby plays an important role in regulating the response to growth factors, DNA damage, and ischemia. Plays a role in the regulation of cell survival, proliferation and cell death. Activates expression of p53/TP53 and TGFB1, and thereby helps prevent tumor formation. Required for normal progress through mitosis and normal proliferation of hepatocytes after partial hepatectomy. Mediates responses to ischemia and hypoxia; regulates the expression of proteins such as IL1B and CXCL2 that are involved in inflammatory processes and development of tissue damage after ischemia. Regulates biosynthesis of luteinizing hormone (LHB) in the pituitary. Regulates the amplitude of the expression rhythms of clock genes: BMAL1, PER2 and NR1D1 in the liver via the activation of PER1 (clock repressor) transcription. Regulates the rhythmic expression of core-clock gene BMAL1 in the suprachiasmatic nucleus (SCN). The chain is Early growth response protein 1 (EGR1) from Bos taurus (Bovine).